Reading from the N-terminus, the 396-residue chain is NADH-quinone oxidoreductase subunit D (396 aa).

This sequence belongs to the complex I 49 kDa subunit family. In terms of assembly, NDH-1 is composed of 14 different subunits. Subunits NuoB, C, D, E, F, and G constitute the peripheral sector of the complex.

Its subcellular location is the cell inner membrane. It carries out the reaction a quinone + NADH + 5 H(+)(in) = a quinol + NAD(+) + 4 H(+)(out). Functionally, NDH-1 shuttles electrons from NADH, via FMN and iron-sulfur (Fe-S) centers, to quinones in the respiratory chain. The immediate electron acceptor for the enzyme in this species is believed to be ubiquinone. Couples the redox reaction to proton translocation (for every two electrons transferred, four hydrogen ions are translocated across the cytoplasmic membrane), and thus conserves the redox energy in a proton gradient. This chain is NADH-quinone oxidoreductase subunit D, found in Orientia tsutsugamushi (strain Boryong) (Rickettsia tsutsugamushi).